The primary structure comprises 144 residues: Bacilliredoxin BLi02323/BL05224 (144 aa).

The protein belongs to the bacilliredoxin family.

This is Bacilliredoxin BLi02323/BL05224 from Bacillus licheniformis (strain ATCC 14580 / DSM 13 / JCM 2505 / CCUG 7422 / NBRC 12200 / NCIMB 9375 / NCTC 10341 / NRRL NRS-1264 / Gibson 46).